Reading from the N-terminus, the 127-residue chain is MNFSKSLLLIAFGGTIGSIFRYLLQYWFGNVLGYSLPWGTLTANLLGSFLIGVVYAISDRFPLFDPQWKFLLASGFCGGFTTFSTFSYETFQMLKSGHYILFLGYICLSVVGGIGFAFAGVWMIKNF.

The next 4 helical transmembrane spans lie at 8–28 (LLIA…QYWF), 37–57 (PWGT…VYAI), 68–88 (WKFL…TFSY), and 100–120 (ILFL…AFAG). Na(+) is bound by residues Gly78 and Thr81.

It belongs to the fluoride channel Fluc/FEX (TC 1.A.43) family.

It localises to the cell inner membrane. It catalyses the reaction fluoride(in) = fluoride(out). With respect to regulation, na(+) is not transported, but it plays an essential structural role and its presence is essential for fluoride channel function. Functionally, fluoride-specific ion channel. Important for reducing fluoride concentration in the cell, thus reducing its toxicity. This Leptospira interrogans serogroup Icterohaemorrhagiae serovar Lai (strain 56601) protein is Fluoride-specific ion channel FluC.